Consider the following 216-residue polypeptide: Probable nicotinate-nucleotide adenylyltransferase (216 aa).

The protein belongs to the NadD family.

The enzyme catalyses nicotinate beta-D-ribonucleotide + ATP + H(+) = deamido-NAD(+) + diphosphate. It functions in the pathway cofactor biosynthesis; NAD(+) biosynthesis; deamido-NAD(+) from nicotinate D-ribonucleotide: step 1/1. Functionally, catalyzes the reversible adenylation of nicotinate mononucleotide (NaMN) to nicotinic acid adenine dinucleotide (NaAD). This Klebsiella pneumoniae subsp. pneumoniae (strain ATCC 700721 / MGH 78578) protein is Probable nicotinate-nucleotide adenylyltransferase.